The chain runs to 360 residues: Acetylxylan esterase / glucomannan deacetylase (360 aa).

The first 21 residues, 1-21, serve as a signal peptide directing secretion; the sequence is MKPHALIGLLAGMLLSSSLYA. The active-site Nucleophile is the serine 151.

It belongs to the carbohydrate esterase 2 (CE2) family.

It is found in the secreted. It catalyses the reaction Deacetylation of xylans and xylo-oligosaccharides.. Its pathway is glycan degradation; xylan degradation. Functionally, involved in the degradation of plant cell wall polysaccharides. Catalyzes the deacetylation of acetylated birchwood xylan and glucomannan, with a large preference for the latter, and of the synthetic substrate 4-nitrophenyl acetate (4-NPAc). This chain is Acetylxylan esterase / glucomannan deacetylase, found in Cellvibrio japonicus (strain Ueda107) (Pseudomonas fluorescens subsp. cellulosa).